The following is a 377-amino-acid chain: MKILVDENMPYAEALFGRLGDVQTVAGRAIPAPALALADALMVRSVTRVDGALLDGSRVKFVGTATAGTDHVDEDWLAQAGIGFSVAPGCNAIAVVEYVFSALLWLAQRDGFALRDKTVGIVGVGNVGGRLQRRLNAFGVRTLLCDPPLAEAGAPGDWQPLETLVAEADVLTFHTPLTLAGRHATWHQVDEALLAALPAGRIIINACRGAVVDNAALLQALEGGKPLSVVLDVWEPEPALSLPLLARVDIGTAHIAGYTLEGKARGTTQVFDAYSAYVGSDERASLAALLPPPAVERIRLRGAIDEEALRLLSHLVYDVRRDDMQLRRVAGLPGEFDRLRKNYYQRREWSSLCVETDNSIGADALRQLGFQARPFAG.

Residues serine 45 and threonine 66 each coordinate substrate. Aspartate 146 and threonine 175 together coordinate NAD(+). The active site involves arginine 208. Aspartate 232 is a binding site for NAD(+). Glutamate 237 is a catalytic residue. Catalysis depends on histidine 254, which acts as the Proton donor. Glycine 257 lines the NAD(+) pocket. Tyrosine 258 provides a ligand contact to substrate.

This sequence belongs to the D-isomer specific 2-hydroxyacid dehydrogenase family. PdxB subfamily. In terms of assembly, homodimer.

The protein localises to the cytoplasm. The enzyme catalyses 4-phospho-D-erythronate + NAD(+) = (R)-3-hydroxy-2-oxo-4-phosphooxybutanoate + NADH + H(+). It functions in the pathway cofactor biosynthesis; pyridoxine 5'-phosphate biosynthesis; pyridoxine 5'-phosphate from D-erythrose 4-phosphate: step 2/5. In terms of biological role, catalyzes the oxidation of erythronate-4-phosphate to 3-hydroxy-2-oxo-4-phosphonooxybutanoate. This is Erythronate-4-phosphate dehydrogenase from Sodalis glossinidius (strain morsitans).